The following is a 560-amino-acid chain: Formate--tetrahydrofolate ligase (560 aa).

69 to 76 (TPAGEGKS) serves as a coordination point for ATP.

Belongs to the formate--tetrahydrofolate ligase family.

It catalyses the reaction (6S)-5,6,7,8-tetrahydrofolate + formate + ATP = (6R)-10-formyltetrahydrofolate + ADP + phosphate. It functions in the pathway one-carbon metabolism; tetrahydrofolate interconversion. The sequence is that of Formate--tetrahydrofolate ligase from Bacillus pumilus (strain SAFR-032).